The sequence spans 89 residues: Small ribosomal subunit protein uS17 (89 aa).

Belongs to the universal ribosomal protein uS17 family. Part of the 30S ribosomal subunit.

Its function is as follows. One of the primary rRNA binding proteins, it binds specifically to the 5'-end of 16S ribosomal RNA. This chain is Small ribosomal subunit protein uS17, found in Polynucleobacter asymbioticus (strain DSM 18221 / CIP 109841 / QLW-P1DMWA-1) (Polynucleobacter necessarius subsp. asymbioticus).